The following is a 417-amino-acid chain: Ribonuclease T2-like (417 aa).

Positions 1-22 (MSSISGFLGAIPGAQQILQTMA) are cleaved as a signal peptide. Disulfide bonds link cysteine 45–cysteine 63, cysteine 52–cysteine 99, cysteine 62–cysteine 165, cysteine 107–cysteine 157, and cysteine 229–cysteine 264. Histidine 92 is an active-site residue. N-linked (GlcNAc...) asparagine glycosylation occurs at asparagine 115. Catalysis depends on residues glutamate 150 and histidine 154. Residues 274-296 (KTPNKDPGHGHEPTKTRHPHGPT) are disordered. The span at 276–288 (PNKDPGHGHEPTK) shows a compositional bias: basic and acidic residues. Asparagine 383 carries N-linked (GlcNAc...) asparagine glycosylation.

Belongs to the RNase T2 family.

It localises to the vacuole lumen. Its subcellular location is the cytoplasm. It catalyses the reaction a ribonucleotidyl-ribonucleotide-RNA + H2O = a 3'-end 3'-phospho-ribonucleotide-RNA + a 5'-end dephospho-ribonucleoside-RNA + H(+). In terms of biological role, rnase which modulates cell survival under stress conditions. Released from the vacuole to the cytoplasm during stress to promote tRNA and rRNA cleavage and to activate separately a downstream pathway that promotes cell death. Involved in cell size, vacuolar morphology and growth at high temperatures and high salt concentration. The polypeptide is Ribonuclease T2-like (rny1) (Emericella nidulans (strain FGSC A4 / ATCC 38163 / CBS 112.46 / NRRL 194 / M139) (Aspergillus nidulans)).